The following is a 787-amino-acid chain: Endonuclease MutS2 (787 aa).

335–342 (GPNTGGKT) lines the ATP pocket. The region spanning 712 to 787 (LDLRGERYED…GLGNTVIELK (76 aa)) is the Smr domain.

The protein belongs to the DNA mismatch repair MutS family. MutS2 subfamily. Homodimer. Binds to stalled ribosomes, contacting rRNA.

Endonuclease that is involved in the suppression of homologous recombination and thus may have a key role in the control of bacterial genetic diversity. Its function is as follows. Acts as a ribosome collision sensor, splitting the ribosome into its 2 subunits. Detects stalled/collided 70S ribosomes which it binds and splits by an ATP-hydrolysis driven conformational change. Acts upstream of the ribosome quality control system (RQC), a ribosome-associated complex that mediates the extraction of incompletely synthesized nascent chains from stalled ribosomes and their subsequent degradation. Probably generates substrates for RQC. In Shouchella clausii (strain KSM-K16) (Alkalihalobacillus clausii), this protein is Endonuclease MutS2.